Consider the following 388-residue polypeptide: NADPH-dependent butanol dehydrogenase (388 aa).

The protein belongs to the iron-containing alcohol dehydrogenase family.

Functionally, this enzyme has activity using butanol and ethanol as substrates. In Clostridium saccharobutylicum, this protein is NADPH-dependent butanol dehydrogenase (adh1).